A 147-amino-acid polypeptide reads, in one-letter code: Alpha-amylase/trypsin inhibitor (147 aa).

The N-terminal stretch at 1-21 (MASDHRRFVLSGAVLLSVLAV) is a signal peptide.

Belongs to the protease inhibitor I6 (cereal trypsin/alpha-amylase inhibitor) family. Five disulfide bonds, which are essential for the inhibitor activity, are probably present. As to expression, endosperm.

The protein resides in the secreted. Alpha-amylase/trypsin inhibitor. This chain is Alpha-amylase/trypsin inhibitor, found in Hordeum vulgare (Barley).